Consider the following 181-residue polypeptide: UPF0301 protein MXAN_2022 (181 aa).

The protein belongs to the UPF0301 (AlgH) family.

The sequence is that of UPF0301 protein MXAN_2022 from Myxococcus xanthus (strain DK1622).